The primary structure comprises 491 residues: Cytochrome P450 2F5 (491 aa).

Cysteine 436 contacts heme.

This sequence belongs to the cytochrome P450 family. Heme is required as a cofactor.

It is found in the endoplasmic reticulum membrane. Its subcellular location is the microsome membrane. It carries out the reaction an organic molecule + reduced [NADPH--hemoprotein reductase] + O2 = an alcohol + oxidized [NADPH--hemoprotein reductase] + H2O + H(+). Cytochromes P450 are a group of heme-thiolate monooxygenases. In liver microsomes, this enzyme is involved in an NADPH-dependent electron transport pathway. It oxidizes a variety of structurally unrelated compounds, including steroids, fatty acids, and xenobiotics. This is Cytochrome P450 2F5 (CYP2F5) from Gorilla gorilla gorilla (Western lowland gorilla).